Consider the following 607-residue polypeptide: Arginine--tRNA ligase (607 aa).

The short motif at 147-157 is the 'HIGH' region element; the sequence is PNIAKEMHVGH.

It belongs to the class-I aminoacyl-tRNA synthetase family. Monomer.

The protein localises to the cytoplasm. The catalysed reaction is tRNA(Arg) + L-arginine + ATP = L-arginyl-tRNA(Arg) + AMP + diphosphate. This is Arginine--tRNA ligase from Prochlorococcus marinus (strain NATL1A).